We begin with the raw amino-acid sequence, 173 residues long: Nucleoside-triphosphatase THEP1 (173 aa).

ATP contacts are provided by residues 15 to 22 (GMPGVGKT) and 101 to 108 (LKIIDEIG).

The protein belongs to the THEP1 NTPase family.

The enzyme catalyses a ribonucleoside 5'-triphosphate + H2O = a ribonucleoside 5'-diphosphate + phosphate + H(+). Has nucleotide phosphatase activity towards ATP, GTP, CTP, TTP and UTP. May hydrolyze nucleoside diphosphates with lower efficiency. This Pyrobaculum aerophilum (strain ATCC 51768 / DSM 7523 / JCM 9630 / CIP 104966 / NBRC 100827 / IM2) protein is Nucleoside-triphosphatase THEP1.